Reading from the N-terminus, the 255-residue chain is CD320 antigen (255 aa).

Residues 1 to 29 (MNGWVARGLARRAAALGLGLRVLLCFGLC) form the signal peptide. Residues 30 to 203 (LEIAPTPIQT…SVQSGNRNVY (174 aa)) lie on the Extracellular side of the membrane. 2 LDL-receptor class A domains span residues 52–89 (SCPP…EECG) and 120–157 (SCPE…LGCG). Intrachain disulfides connect Cys53/Cys66, Cys60/Cys79, Cys73/Cys88, Cys121/Cys134, Cys128/Cys147, and Cys141/Cys156. The Ca(2+) site is built by Trp71, Asp74, Asp76, Asp78, Asp84, and Glu85. Trp139, Asp142, His144, Asp146, Asp152, and Glu153 together coordinate Ca(2+). Asn177 and Asn183 each carry an N-linked (GlcNAc...) asparagine glycan. The chain crosses the membrane as a helical span at residues 204–224 (GIIAAVAVLSISLAAGILFAL). Topologically, residues 225-255 (SRLCAQGCLAPLGLLVSMKGSLQPEKKTSVL) are cytoplasmic.

Interacts (via LDL-receptor class A domains) with TCN2.

It localises to the cell membrane. In terms of biological role, receptor for transcobalamin saturated with cobalamin (TCbl). Plays an important role in cobalamin uptake. Plasma membrane protein that is expressed on follicular dendritic cells (FDC) and mediates interaction with germinal center B cells. Functions as a costimulator to promote B cell responses to antigenic stimuli; promotes B cell differentiation and proliferation. Germinal center-B (GC-B) cells differentiate into memory B-cells and plasma cells (PC) through interaction with T-cells and follicular dendritic cells (FDC). CD320 augments the proliferation of PC precursors generated by IL-10. The chain is CD320 antigen (CD320) from Bos taurus (Bovine).